Reading from the N-terminus, the 336-residue chain is Glycerol-3-phosphate dehydrogenase [NAD(P)+] (336 aa).

NADPH is bound by residues W16 and K109. Sn-glycerol 3-phosphate is bound by residues K109, G137, and S139. A141 lines the NADPH pocket. Sn-glycerol 3-phosphate contacts are provided by K192, D245, S255, R256, and N257. Residue K192 is the Proton acceptor of the active site. R256 contacts NADPH. NADPH-binding residues include V280 and E282.

This sequence belongs to the NAD-dependent glycerol-3-phosphate dehydrogenase family.

The protein resides in the cytoplasm. It catalyses the reaction sn-glycerol 3-phosphate + NAD(+) = dihydroxyacetone phosphate + NADH + H(+). The enzyme catalyses sn-glycerol 3-phosphate + NADP(+) = dihydroxyacetone phosphate + NADPH + H(+). It functions in the pathway membrane lipid metabolism; glycerophospholipid metabolism. Its function is as follows. Catalyzes the reduction of the glycolytic intermediate dihydroxyacetone phosphate (DHAP) to sn-glycerol 3-phosphate (G3P), the key precursor for phospholipid synthesis. This chain is Glycerol-3-phosphate dehydrogenase [NAD(P)+], found in Hyphomonas neptunium (strain ATCC 15444).